Here is a 242-residue protein sequence, read N- to C-terminus: Terpene cyclase dpchB (242 aa).

Transmembrane regions (helical) follow at residues 16–36, 51–71, 78–95, 114–134, 141–161, 169–189, and 207–227; these read VVWI…ANYV, ALLP…MYAF, YVHF…YTAV, LIFV…AKQV, AWSA…QLLC, SYFL…QDII, and IWFV…LWYV.

It belongs to the paxB family.

It localises to the membrane. It participates in secondary metabolite biosynthesis; terpenoid biosynthesis. Its function is as follows. Terpene cyclase; part of the gene cluster that mediates the biosynthesis of the diterpenoid pyrones higginsianins A and B. The first step of the pathway is the synthesis of the alpha-pyrone moiety by the polyketide synthase dpchA via condensation of one acetyl-CoA starter unit with 3 malonyl-CoA units and 2 methylations. The alpha-pyrone is then combined with geranylgeranyl pyrophosphate (GGPP) formed by the GGPP synthase dpchD through the action of the prenyltransferase dpchC to yield a linear alpha-pyrone diterpenoid. Subsequent steps in the diterpenoid pyrone biosynthetic pathway involve the decalin core formation, which is initiated by the epoxidation of the C10-C11 olefin by the FAD-dependent oxidoreductase dpchE, and is followed by a cyclization cascade catalyzed by the terpene cyclase dpchB. The short chain dehydrogenase/reductase dpchG then oxidizes the 8S hydroxy group to a ketone and the short chain dehydrogenase/reductase dpchH reduces the ketone to the 8R hydroxy group to yield higginsianin B. Finally, the FAD-dependent oxidoreductase dpchF converts higginsianin B into higginsianin A. The polypeptide is Terpene cyclase dpchB (Colletotrichum higginsianum (strain IMI 349063) (Crucifer anthracnose fungus)).